The primary structure comprises 217 residues: NAD(P)H-hydrate epimerase (217 aa).

A YjeF N-terminal domain is found at 1–217 (MRAIENAAMA…VAVADIGLSS (217 aa)). Position 48-52 (48-52 (NNGGD)) interacts with (6S)-NADPHX. K(+) is bound by residues asparagine 49 and aspartate 127. Residues 131 to 137 (GIGQTRP) and aspartate 165 contribute to the (6S)-NADPHX site. Threonine 168 is a binding site for K(+).

The protein belongs to the NnrE/AIBP family. The cofactor is K(+).

The enzyme catalyses (6R)-NADHX = (6S)-NADHX. It catalyses the reaction (6R)-NADPHX = (6S)-NADPHX. Its function is as follows. Catalyzes the epimerization of the S- and R-forms of NAD(P)HX, a damaged form of NAD(P)H that is a result of enzymatic or heat-dependent hydration. This is a prerequisite for the S-specific NAD(P)H-hydrate dehydratase to allow the repair of both epimers of NAD(P)HX. The sequence is that of NAD(P)H-hydrate epimerase from Cereibacter sphaeroides (strain KD131 / KCTC 12085) (Rhodobacter sphaeroides).